The following is a 221-amino-acid chain: Toll/interleukin-1 receptor domain-containing adapter protein (221 aa).

Positions 1 to 82 (MASSTSLPAP…HASDSGSSRW (82 aa)) are disordered. Positions 48-67 (SQPTSQDSPLPPSLSSVTSP) are enriched in low complexity. The TIR domain maps to 84–213 (KDYDVCVCHS…GGFRQVKEAV (130 aa)). 2 disulfide bridges follow: cysteine 89–cysteine 134 and cysteine 142–cysteine 174.

Homodimer. Also forms heterodimers with MYD88. May interact with PIK3AP1. Interacts with TLR4 and IRAK2 via their respective TIR domains. Interacts with BMX and TBK1. Interacts with EIF2AK2. Does not interact with IRAK1, nor TLR9. Interacts with TLR2. Interacts with RAGE/AGER. In terms of assembly, (Microbial infection) In case of infection, interacts with B.melitensis protein TcpB (AC Q8YF53); TcpB abolishes the TLR4-TIRAP interaction and downstream signaling. Post-translationally, phosphorylated by IRAK1 and IRAK4. Also phosphorylated by BTK. Polyubiquitinated. Polyubiquitination follows phosphorylation by BTK and leads to TIRAP degradation. As to expression, highly expressed in liver, kidney, spleen, skeletal muscle and heart. Also detected in peripheral blood leukocytes, lung, placenta, small intestine, thymus, colon and brain.

The protein resides in the cytoplasm. It is found in the cell membrane. The protein localises to the membrane. Functionally, adapter involved in TLR2, TLR4 and RAGE signaling pathways in the innate immune response. Acts via IRAK2 and TRAF-6, leading to the activation of NF-kappa-B, MAPK1, MAPK3 and JNK, and resulting in cytokine secretion and the inflammatory response. Positively regulates the production of TNF-alpha (TNF) and interleukin-6 (IL6). This Homo sapiens (Human) protein is Toll/interleukin-1 receptor domain-containing adapter protein (TIRAP).